The primary structure comprises 217 residues: Thiamine-phosphate synthase (217 aa).

4-amino-2-methyl-5-(diphosphooxymethyl)pyrimidine-binding positions include 42 to 46 (QFRDK) and D77. Positions 78 and 97 each coordinate Mg(2+). S117 contacts 4-amino-2-methyl-5-(diphosphooxymethyl)pyrimidine. 144–146 (TIS) provides a ligand contact to 2-[(2R,5Z)-2-carboxy-4-methylthiazol-5(2H)-ylidene]ethyl phosphate. Position 147 (K147) interacts with 4-amino-2-methyl-5-(diphosphooxymethyl)pyrimidine. Residues G175 and 195–196 (IT) each bind 2-[(2R,5Z)-2-carboxy-4-methylthiazol-5(2H)-ylidene]ethyl phosphate.

The protein belongs to the thiamine-phosphate synthase family. Requires Mg(2+) as cofactor.

The catalysed reaction is 2-[(2R,5Z)-2-carboxy-4-methylthiazol-5(2H)-ylidene]ethyl phosphate + 4-amino-2-methyl-5-(diphosphooxymethyl)pyrimidine + 2 H(+) = thiamine phosphate + CO2 + diphosphate. It carries out the reaction 2-(2-carboxy-4-methylthiazol-5-yl)ethyl phosphate + 4-amino-2-methyl-5-(diphosphooxymethyl)pyrimidine + 2 H(+) = thiamine phosphate + CO2 + diphosphate. The enzyme catalyses 4-methyl-5-(2-phosphooxyethyl)-thiazole + 4-amino-2-methyl-5-(diphosphooxymethyl)pyrimidine + H(+) = thiamine phosphate + diphosphate. The protein operates within cofactor biosynthesis; thiamine diphosphate biosynthesis; thiamine phosphate from 4-amino-2-methyl-5-diphosphomethylpyrimidine and 4-methyl-5-(2-phosphoethyl)-thiazole: step 1/1. In terms of biological role, condenses 4-methyl-5-(beta-hydroxyethyl)thiazole monophosphate (THZ-P) and 2-methyl-4-amino-5-hydroxymethyl pyrimidine pyrophosphate (HMP-PP) to form thiamine monophosphate (TMP). The sequence is that of Thiamine-phosphate synthase from Levilactobacillus brevis (strain ATCC 367 / BCRC 12310 / CIP 105137 / JCM 1170 / LMG 11437 / NCIMB 947 / NCTC 947) (Lactobacillus brevis).